Reading from the N-terminus, the 397-residue chain is Riboflavin biosynthesis protein RibBA (397 aa).

The tract at residues 1 to 199 (MFHRIEEALE…IEDLIAYRRH (199 aa)) is DHBP synthase. D-ribulose 5-phosphate-binding positions include 26–27 (RE), D31, 138–142 (RAGHT), and E162. Residue E27 participates in Mg(2+) binding. H141 is a Mg(2+) binding site. The interval 200 to 397 (HETLVTREVE…VNKLGHLLNL (198 aa)) is GTP cyclohydrolase II. 250-254 (RVHSE) lines the GTP pocket. Positions 255, 266, and 268 each coordinate Zn(2+). GTP-binding positions include Q271, 293–295 (EGR), and T315. The Proton acceptor; for GTP cyclohydrolase activity role is filled by D327. R329 serves as the catalytic Nucleophile; for GTP cyclohydrolase activity. 2 residues coordinate GTP: T350 and K355.

In the N-terminal section; belongs to the DHBP synthase family. This sequence in the C-terminal section; belongs to the GTP cyclohydrolase II family. Mg(2+) serves as cofactor. It depends on Mn(2+) as a cofactor. Zn(2+) is required as a cofactor.

The catalysed reaction is D-ribulose 5-phosphate = (2S)-2-hydroxy-3-oxobutyl phosphate + formate + H(+). It catalyses the reaction GTP + 4 H2O = 2,5-diamino-6-hydroxy-4-(5-phosphoribosylamino)-pyrimidine + formate + 2 phosphate + 3 H(+). Its pathway is cofactor biosynthesis; riboflavin biosynthesis; 2-hydroxy-3-oxobutyl phosphate from D-ribulose 5-phosphate: step 1/1. It participates in cofactor biosynthesis; riboflavin biosynthesis; 5-amino-6-(D-ribitylamino)uracil from GTP: step 1/4. In terms of biological role, catalyzes the conversion of D-ribulose 5-phosphate to formate and 3,4-dihydroxy-2-butanone 4-phosphate. Catalyzes the conversion of GTP to 2,5-diamino-6-ribosylamino-4(3H)-pyrimidinone 5'-phosphate (DARP), formate and pyrophosphate. The chain is Riboflavin biosynthesis protein RibBA from Bacillus cereus (strain G9842).